A 590-amino-acid chain; its full sequence is Aspartate--tRNA(Asp/Asn) ligase (590 aa).

Glu-175 lines the L-aspartate pocket. Residues 199-202 (QQYK) are aspartate. L-aspartate contacts are provided by Arg-221 and His-450. 221 to 223 (RDE) is an ATP binding site. Glu-484 contributes to the ATP binding site. Position 491 (Arg-491) interacts with L-aspartate. 536 to 539 (GVDR) is an ATP binding site.

It belongs to the class-II aminoacyl-tRNA synthetase family. Type 1 subfamily. As to quaternary structure, homodimer.

It is found in the cytoplasm. It catalyses the reaction tRNA(Asx) + L-aspartate + ATP = L-aspartyl-tRNA(Asx) + AMP + diphosphate. Its function is as follows. Aspartyl-tRNA synthetase with relaxed tRNA specificity since it is able to aspartylate not only its cognate tRNA(Asp) but also tRNA(Asn). Reaction proceeds in two steps: L-aspartate is first activated by ATP to form Asp-AMP and then transferred to the acceptor end of tRNA(Asp/Asn). The chain is Aspartate--tRNA(Asp/Asn) ligase from Rhodopseudomonas palustris (strain HaA2).